The primary structure comprises 1566 residues: Arginine-glutamic acid dipeptide repeats protein (1566 aa).

Residues Met1–Arg36 show a composition bias toward basic and acidic residues. The tract at residues Met1 to Asp90 is disordered. Residues Ser53 and Ser56 each carry the phosphoserine modification. The segment covering Lys74–Arg85 has biased composition (basic residues). Positions Val103–Gln283 constitute a BAH domain. At Thr120 the chain carries Phosphothreonine. Residues Ser142 and Ser304 each carry the phosphoserine modification. Residues Gly284–Pro387 enclose the ELM2 domain. The region spanning Leu391–Glu443 is the SANT domain. The interval Thr464–Ser495 is disordered. The span at Arg465–Pro474 shows a compositional bias: polar residues. Over residues Ser479–Ala488 the composition is skewed to low complexity. The GATA-type zinc-finger motif lies at Cys507 to Cys532. The disordered stretch occupies residues Leu542–Phe1133. Lys560 is covalently cross-linked (Glycyl lysine isopeptide (Lys-Gly) (interchain with G-Cter in SUMO2)). Ser594, Ser600, and Ser613 each carry phosphoserine. Residues Ser609–Asp623 show a composition bias toward low complexity. Residues Ser624–Ala640 are compositionally biased toward basic and acidic residues. Residue Lys637 forms a Glycyl lysine isopeptide (Lys-Gly) (interchain with G-Cter in SUMO2) linkage. Ser642, Ser656, Ser675, and Ser679 each carry phosphoserine. The span at Glu652–Glu673 shows a compositional bias: basic and acidic residues. Residues Ser688–Asn708 show a composition bias toward basic and acidic residues. Polar residues predominate over residues Arg709–Asp720. The span at Asp726 to Pro751 shows a compositional bias: low complexity. The segment covering Ser752–Thr767 has biased composition (pro residues). Over residues Ser778–Pro796 the composition is skewed to low complexity. Pro residues predominate over residues Gln809–Gln827. A compositionally biased stretch (polar residues) spans Leu829–Ser840. Low complexity-rich tracts occupy residues Gln843–His865 and Ser897–Pro913. Pro residues predominate over residues Arg914–Pro940. The span at Lys970–Pro980 shows a compositional bias: low complexity. The segment covering Pro1030–Cys1052 has biased composition (pro residues). Over residues Pro1053–Ser1085 the composition is skewed to low complexity. Phosphoserine occurs at positions 1106, 1113, and 1115. Positions Ser1106–Glu1117 are enriched in pro residues. The residue at position 1119 (Thr1119) is a Phosphothreonine. The stretch at Gly1156 to Ser1211 forms a coiled coil. Lys1158 bears the N6-acetyllysine mark. The segment covering Lys1162 to Ala1206 has biased composition (basic and acidic residues). A disordered region spans residues Lys1162 to Ile1246. Tyr1259 carries the post-translational modification Phosphotyrosine. Ser1266 is subject to Phosphoserine.

Interacts with HDAC1. Interacts with ATN1. Interaction with ATN1 is improved when the poly-Gln region of ATN1 is extended. Interacts with FAT1. As to expression, widely expressed. Expressed in tumor cell lines.

The protein resides in the nucleus. Plays a role as a transcriptional repressor during development. May play a role in the control of cell survival. Overexpression of RERE recruits BAX to the nucleus particularly to POD and triggers caspase-3 activation, leading to cell death. The chain is Arginine-glutamic acid dipeptide repeats protein (RERE) from Homo sapiens (Human).